A 296-amino-acid chain; its full sequence is ATP synthase gamma chain (296 aa).

It belongs to the ATPase gamma chain family. In terms of assembly, F-type ATPases have 2 components, CF(1) - the catalytic core - and CF(0) - the membrane proton channel. CF(1) has five subunits: alpha(3), beta(3), gamma(1), delta(1), epsilon(1). CF(0) has three main subunits: a, b and c.

The protein resides in the cell inner membrane. Produces ATP from ADP in the presence of a proton gradient across the membrane. The gamma chain is believed to be important in regulating ATPase activity and the flow of protons through the CF(0) complex. This chain is ATP synthase gamma chain, found in Methylorubrum extorquens (strain CM4 / NCIMB 13688) (Methylobacterium extorquens).